The following is a 110-amino-acid chain: UPF0339 protein SO_3888 (110 aa).

2 repeat units span residues 10 to 58 and 61 to 109.

The protein belongs to the UPF0339 family. Duplicated subfamily.

The chain is UPF0339 protein SO_3888 from Shewanella oneidensis (strain ATCC 700550 / JCM 31522 / CIP 106686 / LMG 19005 / NCIMB 14063 / MR-1).